The chain runs to 601 residues: Amino-acid acetyltransferase, mitochondrial (601 aa).

In terms of domain architecture, N-acetyltransferase spans 401 to 558 (FTMDNLIASK…KKKQNNKKKK (158 aa)).

The protein belongs to the acetyltransferase family.

The protein resides in the mitochondrion. It catalyses the reaction L-glutamate + acetyl-CoA = N-acetyl-L-glutamate + CoA + H(+). The protein operates within amino-acid biosynthesis; L-arginine biosynthesis; N(2)-acetyl-L-ornithine from L-glutamate: step 1/4. In terms of biological role, N-acetylglutamate synthase involved in arginine biosynthesis. This Lodderomyces elongisporus (strain ATCC 11503 / CBS 2605 / JCM 1781 / NBRC 1676 / NRRL YB-4239) (Yeast) protein is Amino-acid acetyltransferase, mitochondrial (ARG2).